Here is a 553-residue protein sequence, read N- to C-terminus: Chaperonin GroEL 1 (553 aa).

Residues 29–32, 86–90, Gly413, 476–478, and Asp492 contribute to the ATP site; these read TIGP, DGTTT, and NAL. Residues 521–542 form a disordered region; it reads KPEPPAAPAPGGDPMGGMGGMG. Gly residues predominate over residues 533 to 542; the sequence is DPMGGMGGMG.

Belongs to the chaperonin (HSP60) family. Forms a cylinder of 14 subunits composed of two heptameric rings stacked back-to-back. Interacts with the co-chaperonin GroES.

It localises to the cytoplasm. The catalysed reaction is ATP + H2O + a folded polypeptide = ADP + phosphate + an unfolded polypeptide.. In terms of biological role, together with its co-chaperonin GroES, plays an essential role in assisting protein folding. The GroEL-GroES system forms a nano-cage that allows encapsulation of the non-native substrate proteins and provides a physical environment optimized to promote and accelerate protein folding. This is Chaperonin GroEL 1 from Synechococcus sp. (strain WH7803).